We begin with the raw amino-acid sequence, 82 residues long: MILKYPYATEKASMIVERDGQLQFIVDRKASKGQIKVAIEKMFDQPVTRVRTLMNNRGEKKAMVSFSNPKAAEEILSRLGIM.

The protein belongs to the universal ribosomal protein uL23 family. As to quaternary structure, part of the 50S ribosomal subunit. Contacts protein L29.

Functionally, binds to 23S rRNA. One of the proteins that surrounds the polypeptide exit tunnel on the outside of the ribosome. The polypeptide is Large ribosomal subunit protein uL23 (Methanospirillum hungatei JF-1 (strain ATCC 27890 / DSM 864 / NBRC 100397 / JF-1)).